The chain runs to 94 residues: Integration host factor subunit beta (94 aa).

It belongs to the bacterial histone-like protein family. In terms of assembly, heterodimer of an alpha and a beta chain.

In terms of biological role, this protein is one of the two subunits of integration host factor, a specific DNA-binding protein that functions in genetic recombination as well as in transcriptional and translational control. The polypeptide is Integration host factor subunit beta (Nitrosospira multiformis (strain ATCC 25196 / NCIMB 11849 / C 71)).